The primary structure comprises 749 residues: Transcription factor RFX3 (749 aa).

The segment at residues 183–258 is a DNA-binding region (RFX-type winged-helix); sequence HLQWLLDNYE…YHYYGIRVKP (76 aa).

The protein belongs to the RFX family.

Its subcellular location is the nucleus. In terms of biological role, transcription factor required for ciliogenesis and islet cell differentiation during endocrine pancreas development. The sequence is that of Transcription factor RFX3 (rfx3) from Xenopus tropicalis (Western clawed frog).